The following is a 233-amino-acid chain: tRNA (guanine-N(7)-)-methyltransferase (233 aa).

The S-adenosyl-L-methionine site is built by E65, E90, D117, and D139. The active site involves D139. Substrate is bound by residues K143, D175, and 212–215 (TRYE).

It belongs to the class I-like SAM-binding methyltransferase superfamily. TrmB family.

It carries out the reaction guanosine(46) in tRNA + S-adenosyl-L-methionine = N(7)-methylguanosine(46) in tRNA + S-adenosyl-L-homocysteine. The protein operates within tRNA modification; N(7)-methylguanine-tRNA biosynthesis. In terms of biological role, catalyzes the formation of N(7)-methylguanine at position 46 (m7G46) in tRNA. This Roseobacter denitrificans (strain ATCC 33942 / OCh 114) (Erythrobacter sp. (strain OCh 114)) protein is tRNA (guanine-N(7)-)-methyltransferase.